Reading from the N-terminus, the 391-residue chain is F-box/kelch-repeat protein At3g16740 (391 aa).

The F-box domain occupies 1–47 (MVQISDLPRDLTEEVLSRIPVTSMRAVRFTCKKWNTLSKDRSFTKKH). 2 Kelch repeats span residues 104–154 (KIFH…YEEK) and 163–215 (ILRF…LKGN).

Part of a SCF (ASK-cullin-F-box) protein ligase complex. Interacts with ASK11.

Its subcellular location is the nucleus. Its pathway is protein modification; protein ubiquitination. Its function is as follows. Component of SCF(ASK-cullin-F-box) E3 ubiquitin ligase complexes, which may mediate the ubiquitination and subsequent proteasomal degradation of target proteins. This Arabidopsis thaliana (Mouse-ear cress) protein is F-box/kelch-repeat protein At3g16740.